The chain runs to 176 residues: Cytochrome b (176 aa).

The next 3 membrane-spanning stretches (helical) occupy residues 33-53 (FGSL…FLAM), 77-98 (WLLR…YLHV), and 113-133 (WNVG…GYVL). Residues H83 and H97 each contribute to the heme b site.

The protein belongs to the cytochrome b family. As to quaternary structure, the cytochrome bc1 complex contains 11 subunits: 3 respiratory subunits (MT-CYB, CYC1 and UQCRFS1), 2 core proteins (UQCRC1 and UQCRC2) and 6 low-molecular weight proteins (UQCRH/QCR6, UQCRB/QCR7, UQCRQ/QCR8, UQCR10/QCR9, UQCR11/QCR10 and a cleavage product of UQCRFS1). This cytochrome bc1 complex then forms a dimer. Heme b is required as a cofactor.

The protein localises to the mitochondrion inner membrane. Its function is as follows. Component of the ubiquinol-cytochrome c reductase complex (complex III or cytochrome b-c1 complex) that is part of the mitochondrial respiratory chain. The b-c1 complex mediates electron transfer from ubiquinol to cytochrome c. Contributes to the generation of a proton gradient across the mitochondrial membrane that is then used for ATP synthesis. The chain is Cytochrome b (MT-CYB) from Tadarida brasiliensis (Brazilian free-tailed bat).